The chain runs to 541 residues: Membrane protein insertase YidC (541 aa).

5 helical membrane-spanning segments follow: residues 6–26 (FFLI…WEIT), 356–376 (IIHS…LAFY), 430–450 (LPIL…LEMV), 463–483 (LSAP…MFIQ), and 498–518 (IMMA…SGLV).

This sequence belongs to the OXA1/ALB3/YidC family. Type 1 subfamily. Interacts with the Sec translocase complex via SecD. Specifically interacts with transmembrane segments of nascent integral membrane proteins during membrane integration.

It is found in the cell inner membrane. Functionally, required for the insertion and/or proper folding and/or complex formation of integral membrane proteins into the membrane. Involved in integration of membrane proteins that insert both dependently and independently of the Sec translocase complex, as well as at least some lipoproteins. Aids folding of multispanning membrane proteins. This is Membrane protein insertase YidC from Vesicomyosocius okutanii subsp. Calyptogena okutanii (strain HA).